The primary structure comprises 679 residues: Kelch-like protein diablo (679 aa).

Residues 1–48 show a composition bias toward gly residues; it reads MGDLPGGGGGAAGGAGAAGGGGGGGNGAAGSSSSGGGASGSGGGGPGS. The segment at 1–84 is disordered; sequence MGDLPGGGGG…RLSHTSEKHP (84 aa). The 68-residue stretch at 101 to 168 folds into the BTB domain; it reads CDVVLNVGGR…CYTAHIIVEE (68 aa). A BACK domain is found at 203–305; that stretch reads CLGIRAFADT…SPKFLVGTVG (103 aa). 6 Kelch repeats span residues 352-398, 400-446, 447-493, 495-540, 542-587, and 588-634; these read VLFA…VLND, LYAV…VLDG, FLYA…VLGG, LYAI…VFNN, IYAV…VVNG, and QLYA…VMRA. A disordered region spans residues 643 to 679; the sequence is CDNNSSNNNNNNYNLKHQQQQPQQQQQQQQQQTQQQL. The segment covering 645 to 679 has biased composition (low complexity); it reads NNSSNNNNNNYNLKHQQQQPQQQQQQQQQQTQQQL.

Its pathway is protein modification; protein ubiquitination. Its function is as follows. Probable substrate-specific adapter of an E3 ubiquitin-protein ligase complex which mediates the ubiquitination and subsequent proteasomal degradation of target proteins. May have a role in synapse differentiation and growth. This is Kelch-like protein diablo from Drosophila willistoni (Fruit fly).